The following is a 985-amino-acid chain: Thioredoxin domain-containing protein 11 (985 aa).

Positions 1-11 are enriched in gly residues; that stretch reads MSECGGRGGGS. The interval 1 to 38 is disordered; sequence MSECGGRGGGSSSSEDAEDEGGGGGGPAGSDCLSSSPT. Low complexity predominate over residues 29 to 38; the sequence is GSDCLSSSPT. The helical transmembrane segment at 65–85 threads the bilayer; that stretch reads LLCGAVALGCALLLALKFTCS. A Thioredoxin 1 domain is found at 92–214; it reads IPAKPPVSFF…IEKFVRRVMK (123 aa). Cystine bridges form between Cys469–Cys472 and Cys719–Cys722. Residues 649 to 799 enclose the Thioredoxin 2 domain; it reads LDPKQALMKL…LLRFILHHSD (151 aa). The stretch at 821–919 forms a coiled coil; that stretch reads VLQRGHISHL…ASENLLTENT (99 aa). Phosphoserine is present on Ser828. The segment at 935-985 is disordered; that stretch reads RDGAESLAAQREVHPKQPEPSATPQLPGSSPPPANVSATLVSERNKENRTD.

The protein belongs to the protein disulfide isomerase family. As to quaternary structure, interacts with the cytoplasmic part of DUOX1 and DUOX2. Interacts with TPO and CYBA. In terms of tissue distribution, widely expressed at low level. Expressed at higher level in thyroid and prostate.

Its subcellular location is the endoplasmic reticulum membrane. In terms of biological role, may act as a redox regulator involved in DUOX proteins folding. The interaction with DUOX1 and DUOX2 suggest that it belongs to a multiprotein complex constituting the thyroid H(2)O(2) generating system. It is however not sufficient to assist DUOX1 and DUOX2 in H(2)O(2) generation. The chain is Thioredoxin domain-containing protein 11 (TXNDC11) from Homo sapiens (Human).